The sequence spans 250 residues: L-cystine transport system ATP-binding protein TcyN (250 aa).

Residues 4–244 (IEVKNLVKKF…PEQPRTRQFL (241 aa)) form the ABC transporter domain. 36–43 (GPSGSGKT) provides a ligand contact to ATP.

The protein belongs to the ABC transporter superfamily. As to quaternary structure, the complex is composed of two ATP-binding proteins (TcyN), two transmembrane proteins (TcyL) and a solute-binding protein (TcyJ).

It localises to the cell inner membrane. The catalysed reaction is L-cystine(out) + ATP + H2O = L-cystine(in) + ADP + phosphate + H(+). The enzyme catalyses D-cystine(out) + ATP + H2O = D-cystine(in) + ADP + phosphate + H(+). Its activity is regulated as follows. The TcyJLN system is inhibited by L-cystine, L-cysteine, DL-2,6-diaminopimelic acid and L-cystathionine, and is stimulated by D-cysteine. In terms of biological role, part of the ABC transporter complex TcyJLN involved in L-cystine import. This high affinity cystine transporter is involved in resistance to oxidative stress by forming a L-cysteine/L-cystine shuttle system with the EamA transporter, which exports L-cysteine as reducing equivalents to the periplasm to prevent the cells from oxidative stress. Exported L-cysteine can reduce the periplasmic hydrogen peroxide to water, and then generated L-cystine is imported back into the cytoplasm via the TcyJLN complex. Functions at low cystine concentrations. The system can also transport L-cysteine, diaminopimelic acid (DAP), djenkolate, lanthionine, D-cystine, homocystine, and it mediates accumulation of the toxic compounds L-selenaproline (SCA) and L-selenocystine (SeCys). Could also facilitate threonine efflux. Responsible for energy coupling to the transport system. This chain is L-cystine transport system ATP-binding protein TcyN, found in Escherichia coli (strain K12).